The primary structure comprises 451 residues: Probable phosphoglucosamine mutase (451 aa).

Ser-96 acts as the Phosphoserine intermediate in catalysis. Mg(2+) is bound by residues Ser-96, Asp-233, Asp-235, and Asp-237. Position 96 is a phosphoserine (Ser-96).

The protein belongs to the phosphohexose mutase family. The cofactor is Mg(2+). Activated by phosphorylation.

It carries out the reaction alpha-D-glucosamine 1-phosphate = D-glucosamine 6-phosphate. Catalyzes the conversion of glucosamine-6-phosphate to glucosamine-1-phosphate. The sequence is that of Probable phosphoglucosamine mutase from Pyrococcus abyssi (strain GE5 / Orsay).